A 689-amino-acid polypeptide reads, in one-letter code: DNA topoisomerase 1 (689 aa).

The region spanning 3–113 is the Toprim domain; the sequence is DNLVIVESPA…KENRVVFNEI (111 aa). Glu-9 and Asp-82 together coordinate Mg(2+). In terms of domain architecture, Topo IA-type catalytic spans 129–557; sequence EMNLVDAQQA…FFSSFKQDVE (429 aa). The interval 163 to 168 is interaction with DNA; that stretch reads SAGRVQ. The active-site O-(5'-phospho-DNA)-tyrosine intermediate is the Tyr-298. The disordered stretch occupies residues 328–357; it reads SKRKASGKQGDQDAHEAIRPSSTMRTPDDM. C4-type zinc fingers lie at residues 577–603, 617–645, and 658–681; these read CEVCGSPMVIKMGRYGKFMACSNFPDC, CPKCNDGDVVERKSKKNRVFYGCSKYPEC, and CPKCNQYLVENKKGKTTQVICSNC.

It belongs to the type IA topoisomerase family. In terms of assembly, monomer. Requires Mg(2+) as cofactor.

It carries out the reaction ATP-independent breakage of single-stranded DNA, followed by passage and rejoining.. Functionally, releases the supercoiling and torsional tension of DNA, which is introduced during the DNA replication and transcription, by transiently cleaving and rejoining one strand of the DNA duplex. Introduces a single-strand break via transesterification at a target site in duplex DNA. The scissile phosphodiester is attacked by the catalytic tyrosine of the enzyme, resulting in the formation of a DNA-(5'-phosphotyrosyl)-enzyme intermediate and the expulsion of a 3'-OH DNA strand. The free DNA strand then undergoes passage around the unbroken strand, thus removing DNA supercoils. Finally, in the religation step, the DNA 3'-OH attacks the covalent intermediate to expel the active-site tyrosine and restore the DNA phosphodiester backbone. This chain is DNA topoisomerase 1, found in Staphylococcus aureus.